Here is a 144-residue protein sequence, read N- to C-terminus: NADH dehydrogenase [ubiquinone] 1 alpha subcomplex subunit 13 (144 aa).

N-acetylalanine is present on Ala-2. The helical transmembrane segment at 30-51 (LSGYSMFAVGIGALIFGYWRMM) threads the bilayer.

This sequence belongs to the complex I NDUFA13 subunit family. As to quaternary structure, complex I is composed of 45 different subunits. Interacts with CARD15, but not with CARD4. Interacts with STAT3, but not with STAT1, STAT2 and STAT5A. Interacts with OLFM4.

The protein resides in the mitochondrion inner membrane. It localises to the nucleus. In terms of biological role, accessory subunit of the mitochondrial membrane respiratory chain NADH dehydrogenase (Complex I), that is believed not to be involved in catalysis. Complex I functions in the transfer of electrons from NADH to the respiratory chain. The immediate electron acceptor for the enzyme is believed to be ubiquinone. Involved in the interferon/all-trans-retinoic acid (IFN/RA) induced cell death. This apoptotic activity is inhibited by interaction with viral IRF1. Prevents the transactivation of STAT3 target genes. May play a role in CARD15-mediated innate mucosal responses and serve to regulate intestinal epithelial cell responses to microbes. In Mus musculus (Mouse), this protein is NADH dehydrogenase [ubiquinone] 1 alpha subcomplex subunit 13 (Ndufa13).